The primary structure comprises 658 residues: Cysteine-rich receptor-like protein kinase 14 (658 aa).

The N-terminal stretch at 1-22 is a signal peptide; the sequence is MELKNLFPIFWFVLVGFAVVSA. 2 consecutive Gnk2-homologous domains span residues 23 to 125 and 131 to 240; these read QECG…NSSF and AEPH…LFPF. Residues 23–277 lie on the Extracellular side of the membrane; sequence QECGKTGFFV…ATKKGSITIS (255 aa). N-linked (GlcNAc...) asparagine glycosylation is found at Asn51, Asn60, Asn102, Asn122, and Asn146. Residues 278–298 form a helical membrane-spanning segment; sequence IGIVWAIIIPTVIVVFLVLLA. Residues 299 to 658 are Cytoplasmic-facing; it reads LGFVVYRRRK…DVTITDFEPR (360 aa). The 278-residue stretch at 337 to 614 folds into the Protein kinase domain; the sequence is FSESNIIGRG…NMMLINNSYV (278 aa). ATP-binding positions include 343-351 and Lys364; that span reads IGRGGFGEV. Phosphotyrosine is present on Tyr409. Asp461 serves as the catalytic Proton acceptor. The residue at position 465 (Ser465) is a Phosphoserine. A Phosphothreonine modification is found at Thr501. Position 509 is a phosphotyrosine (Tyr509).

The protein belongs to the protein kinase superfamily. Ser/Thr protein kinase family. CRK subfamily.

The protein localises to the membrane. It catalyses the reaction L-seryl-[protein] + ATP = O-phospho-L-seryl-[protein] + ADP + H(+). The enzyme catalyses L-threonyl-[protein] + ATP = O-phospho-L-threonyl-[protein] + ADP + H(+). In Arabidopsis thaliana (Mouse-ear cress), this protein is Cysteine-rich receptor-like protein kinase 14 (CRK14).